The following is a 349-amino-acid chain: Probable formaldehyde dehydrogenase AdhA (349 aa).

7 residues coordinate Zn(2+): cysteine 44, histidine 66, cysteine 97, cysteine 100, cysteine 103, cysteine 111, and cysteine 161.

It belongs to the zinc-containing alcohol dehydrogenase family. The cofactor is Zn(2+).

Functionally, functions in the protection against aldehyde-stress. In Bacillus subtilis (strain 168), this protein is Probable formaldehyde dehydrogenase AdhA (adhA).